The following is a 454-amino-acid chain: N-myc 2 proto-oncogene protein (454 aa).

Disordered regions lie at residues Glu-133–Thr-166, Ala-231–Glu-270, and Ser-326–Arg-374. Acidic residues predominate over residues Ala-256–Glu-270. Residues Arg-363 to Arg-374 show a composition bias toward basic and acidic residues. Residues Val-371 to Leu-423 form the bHLH domain. Residues Leu-423–Leu-444 are leucine-zipper.

Efficient DNA binding requires dimerization with another bHLH protein.

The protein localises to the nucleus. This chain is N-myc 2 proto-oncogene protein (N-MYC2), found in Otospermophilus beecheyi (California ground squirrel).